The primary structure comprises 155 residues: Putative pre-16S rRNA nuclease (155 aa).

Belongs to the YqgF nuclease family.

Its subcellular location is the cytoplasm. Its function is as follows. Could be a nuclease involved in processing of the 5'-end of pre-16S rRNA. This Xylella fastidiosa (strain M12) protein is Putative pre-16S rRNA nuclease.